The following is a 339-amino-acid chain: Probable N5-carboxyaminoimidazole ribonucleotide mutase (339 aa).

Ser11, Asp14, and Arg41 together coordinate substrate.

The protein belongs to the AIR carboxylase family. Class I subfamily.

It carries out the reaction 5-carboxyamino-1-(5-phospho-D-ribosyl)imidazole + H(+) = 5-amino-1-(5-phospho-D-ribosyl)imidazole-4-carboxylate. Its pathway is purine metabolism; IMP biosynthesis via de novo pathway; 5-amino-1-(5-phospho-D-ribosyl)imidazole-4-carboxylate from 5-amino-1-(5-phospho-D-ribosyl)imidazole (N5-CAIR route): step 2/2. In terms of biological role, catalyzes the conversion of N5-carboxyaminoimidazole ribonucleotide (N5-CAIR) to 4-carboxy-5-aminoimidazole ribonucleotide (CAIR). The polypeptide is Probable N5-carboxyaminoimidazole ribonucleotide mutase (Methanobrevibacter smithii).